The following is a 298-amino-acid chain: Glyoxalase domain-containing protein 4 (298 aa).

A VOC 1 domain is found at 5 to 130 (RALHFVFKVK…GGYKFYLQDR (126 aa)). Lys109 is subject to N6-succinyllysine. Position 131 is a phosphoserine (Ser131). The region spanning 137 to 258 (PVLKVTLAVS…DGHEICFVGD (122 aa)) is the VOC 2 domain. Lys273 carries the N6-succinyllysine modification.

This sequence belongs to the glyoxalase I family. Interacts with NUDT9.

Its subcellular location is the mitochondrion. The chain is Glyoxalase domain-containing protein 4 (Glod4) from Mus musculus (Mouse).